Reading from the N-terminus, the 306-residue chain is Putative dihydroorotate dehydrogenase A (fumarate) (306 aa).

FMN contacts are provided by residues S24 and 48-49; that span reads KS. Substrate is bound by residues K48, 72-76, and N129; that span reads NAVGL. Position 129 (N129) interacts with FMN. The active-site Nucleophile is C132. Residues K167 and I192 each coordinate FMN. 193-194 is a substrate binding site; that stretch reads NS. FMN is bound by residues G218 and 244-245; that span reads GG.

It belongs to the dihydroorotate dehydrogenase family. Type 1 subfamily. In terms of assembly, homodimer. FMN serves as cofactor.

The protein localises to the cytoplasm. It catalyses the reaction (S)-dihydroorotate + fumarate = orotate + succinate. The protein operates within pyrimidine metabolism; UMP biosynthesis via de novo pathway. In terms of biological role, catalyzes the conversion of dihydroorotate to orotate with fumarate as the electron acceptor. This Aeropyrum pernix (strain ATCC 700893 / DSM 11879 / JCM 9820 / NBRC 100138 / K1) protein is Putative dihydroorotate dehydrogenase A (fumarate) (pyrD).